The following is a 307-amino-acid chain: MSTSKLVEIPEPLAASYARAFGEEGQAWIAALPALVEELLDRWELTADGASASGEASLVLPVLRTDGTRAVLKLQLPREETSAAITGLRTWNGHGVVRLLDHDPRSSTMLLERLDASRTLASVEDDDAAMGVLAGLLARLVSVPAPRGLRGLGDIAGAMLEEVPRAVAALADPADRRLLNDWASAVAELVGEPGDRMLHWDLHYGNVLAAEREPWLAIDPEPLAGDPGFDLWPALDSRWDDIVAQRDVVRVVRRRFDLLTEVLGLDRARAAGWTYGRLLQNALWDIEDGSAALDPAAVTLAQALRGH.

Residue 133–145 (LAGLLARLVSVPA) participates in streptomycin binding. The active-site Proton acceptor is the D201.

This sequence belongs to the aminoglycoside phosphotransferase family.

It catalyses the reaction streptomycin + ATP = streptomycin 6-phosphate + ADP + H(+). The aminoglycoside phosphotransferases achieve inactivation of their antibiotic substrates by phosphorylation. The protein is Streptomycin 6-kinase (sph) of Streptomyces glaucescens.